The chain runs to 506 residues: Arabinose import ATP-binding protein AraG (506 aa).

ABC transporter domains follow at residues 10–245 (LEFC…MVGR) and 253–501 (YRSR…MLGN). 42–49 (GENGAGKS) contacts ATP.

The protein belongs to the ABC transporter superfamily. Arabinose importer (TC 3.A.1.2.2) family. The complex is composed of two ATP-binding proteins (AraG), two transmembrane proteins (AraH) and a solute-binding protein (AraF).

It is found in the cell inner membrane. It carries out the reaction L-arabinose(out) + ATP + H2O = L-arabinose(in) + ADP + phosphate + H(+). In terms of biological role, part of the ABC transporter complex AraFGH involved in arabinose import. Responsible for energy coupling to the transport system. This Vibrio parahaemolyticus serotype O3:K6 (strain RIMD 2210633) protein is Arabinose import ATP-binding protein AraG.